The sequence spans 547 residues: Varicidin biosynthesis cluster MFS-type transporer (547 aa).

The span at 1 to 17 (MTTSTSKNAISKSSQED) shows a compositional bias: polar residues. Residues 1–33 (MTTSTSKNAISKSSQEDLCSDTKDKGSSGGGNE) form a disordered region. The next 11 membrane-spanning stretches (helical) occupy residues 47–67 (LVLLFVGLALSVFCLSLVCIS), 156–176 (LAPSLLLPGLCPCIVAQSVFT), 183–203 (WCFWINLPLGGVTAVAVFLFV), 224–244 (ALGTCILMPLIICLLLALQWG), 252–272 (SWRVVLCLVLFTVLLVAWLYV), 296–316 (ILFTFGINGSMFIIVYYVPIW), 330–350 (INFLACSGSMSVAAIIAGTLV), 360–382 (GQWRIFNYTTLVSIATGLIWRYN), 392–412 (AGTLVMFGFGAGSGMQMPFIA), 422–442 (ISLGSSLIILIQTMGGAVFLA), and 503–523 (CFLVCIVLACLTIIADAGMEW).

It belongs to the major facilitator superfamily. TCR/Tet family.

It is found in the cell membrane. In terms of biological role, MFS-type transporer; part of the gene cluster that mediates the biosynthesis of varicidin A, an antifungal natural product containing a cis-octahydrodecalin core. The sequence is that of Varicidin biosynthesis cluster MFS-type transporer from Talaromyces variabilis (Penicillium variabile).